An 88-amino-acid chain; its full sequence is Synaptonemal complex central element protein 3 (88 aa).

A coiled-coil region spans residues 8-75; it reads ERSYDNMLKM…FLNCKEEMEK (68 aa).

Homodimer. Can form higher-order homooligomers. Interacts with SYCP1 (via tetrameric core); the interaction remodels SYCP1 homotetramers to 2:1 heterotrimers with SYCE3. SYCP1/SYCE3 heterotrimers form lattice assemblies as part of the mature synaptonemal complex via both lateral and head-to-head interactions. Interacts with the SYCE1-SIX6OS1 complex; the interaction recruits the SYCE1-SIX6OS1 complex to the central element of the synaptonemal complex. Interacts with the SYCE2-TEX12 complex; the interaction promotes fibrous assembly of SYCE2-TEX12 as part of the synaptonemal complex central element. Interacts with SYCE1. Interacts with SYCE2. Interacts with proteasome subunit PSMA8; to participate in meiosis progression during spermatogenesis. Interacts with SPO16. As to expression, expression is restricted to spermatocytes and is absent in spermatogonia, spermatids and spermatogonia (at protein level). Expressed in adult testis and embryonic ovary. Expressed in the convoluted seminiferous tubules in spermatogonia and spermatocytes.

The protein localises to the nucleus. Its subcellular location is the chromosome. In terms of biological role, major component of the transverse central element of synaptonemal complexes (SCS), formed between homologous chromosomes during meiotic prophase. Required for the assembly of the central element of the synaptonemal complex during meiosis, via remodeling of SYCP1 lattice structures and promoting recruitment of SYCE2-TEX12 and SYCE1-SIX60S1 complexes. Required for chromosome loading of the central element-specific SCS proteins, and for initiating synapsis between homologous chromosomes. Chromosome loading appears to require SYCP1. Required for fertility and normal testis development. May play a role in apoptosis of spermatogenic cells and pathogenesis of cryptorchidism. In Mus musculus (Mouse), this protein is Synaptonemal complex central element protein 3.